A 131-amino-acid polypeptide reads, in one-letter code: Small ribosomal subunit protein uS8 (131 aa).

This sequence belongs to the universal ribosomal protein uS8 family. As to quaternary structure, part of the 30S ribosomal subunit. Contacts proteins S5 and S12.

In terms of biological role, one of the primary rRNA binding proteins, it binds directly to 16S rRNA central domain where it helps coordinate assembly of the platform of the 30S subunit. This Malacoplasma penetrans (strain HF-2) (Mycoplasma penetrans) protein is Small ribosomal subunit protein uS8.